The primary structure comprises 345 residues: Centromere protein L (345 aa).

Phosphoserine occurs at positions 40 and 54.

This sequence belongs to the CENP-L/IML3 family. In terms of assembly, component of the CENPA-CAD complex, composed of CENPI, CENPK, CENPL, CENPO, CENPP, CENPQ, CENPR and CENPS. The CENPA-CAD complex interacts with the CENPA-NAC complex, at least composed of CENPA, CENPC, CENPH, CENPM, CENPN, CENPT and CENPU.

Its subcellular location is the nucleus. It is found in the chromosome. The protein resides in the centromere. Its function is as follows. Component of the CENPA-CAD (nucleosome distal) complex, a complex recruited to centromeres which is involved in assembly of kinetochore proteins, mitotic progression and chromosome segregation. May be involved in incorporation of newly synthesized CENPA into centromeres via its interaction with the CENPA-NAC complex. In Rattus norvegicus (Rat), this protein is Centromere protein L (Cenpl).